A 387-amino-acid chain; its full sequence is 3-ketoacyl-CoA thiolase (387 aa).

Cys91 serves as the catalytic Acyl-thioester intermediate. Residues His343 and Cys373 each act as proton acceptor in the active site.

This sequence belongs to the thiolase-like superfamily. Thiolase family. As to quaternary structure, heterotetramer of two alpha chains (FadB) and two beta chains (FadA).

The protein localises to the cytoplasm. The catalysed reaction is an acyl-CoA + acetyl-CoA = a 3-oxoacyl-CoA + CoA. It functions in the pathway lipid metabolism; fatty acid beta-oxidation. Catalyzes the final step of fatty acid oxidation in which acetyl-CoA is released and the CoA ester of a fatty acid two carbons shorter is formed. Involved in the aerobic and anaerobic degradation of long-chain fatty acids. The polypeptide is 3-ketoacyl-CoA thiolase (Escherichia coli O6:H1 (strain CFT073 / ATCC 700928 / UPEC)).